The following is an 852-amino-acid chain: Transient receptor potential cation channel subfamily V member 4 (852 aa).

At 1–455 (MADPEDPRDA…RDKWRKFGAV (455 aa)) the chain is on the cytoplasmic side. The interval 30-51 (VEDTPSPAEPSRGPPGAVDGKQ) is disordered. ATP contacts are provided by residues Lys178, Lys183, Asn187, 222-225 (YRGQ), and Arg234. 2 ANK repeats span residues 223-252 (RGQT…DVHA) and 270-299 (FGEL…KQAD). Residues 235 to 237 (RCK), 282 to 285 (NQPH), and Lys330 contribute to the a 1,2-diacyl-sn-glycero-3-phospho-(1D-myo-inositol-4,5-bisphosphate) site. Residues 355–387 (DGLSPLMMAAKTGKIGIFQHIIRREIADEDVRH) form an ANK 3 repeat. Residues 456 to 476 (SFYISVVSYLCAMIIFTLIAY) form a helical membrane-spanning segment. The Extracellular segment spans residues 477–493 (YRPMEGPPPYPYTTTID). A helical membrane pass occupies residues 494–520 (YLRLAGEIITLLTGILFFFSNIKDLFM). Topologically, residues 521–533 (KKCPGVNSFFIDG) are cytoplasmic. A helical membrane pass occupies residues 534-554 (SFQLLYFIYSVLVIVTAGLYL). Residues 555–558 (GGVE) are Extracellular-facing. A helical transmembrane segment spans residues 559–579 (AYLAVMVFALVLGWMNALYFT). Residues 580–594 (RGLKLTGTYSIMIQK) are Cytoplasmic-facing. Residues 595–622 (ILFKDLFRFLLVYLLFMIGYASALVSLL) traverse the membrane as a helical segment. Topologically, residues 623 to 651 (NPCPSSESCSEDHSNCTLPTYPSCRDSQT) are extracellular. The pore-forming intramembrane region spans 652–671 (FSTFLLDLFKLTIGMGDLEM). The Selectivity filter motif lies at 665–668 (GMGD). Residue Asp668 participates in Ca(2+) binding. Topologically, residues 672–679 (LESAKYPG) are extracellular. A helical membrane pass occupies residues 680 to 708 (VFIILLVTYIILTFVLLLNMLIALMGETV). The Cytoplasmic segment spans residues 709–852 (GQVSKESKHI…RHGQTPSSPL (144 aa)).

This sequence belongs to the transient receptor (TC 1.A.4) family. TrpV subfamily. TRPV4 sub-subfamily. As to quaternary structure, homotetramer. Interacts with Ca(2+)-calmodulin.

The protein localises to the apical cell membrane. Its subcellular location is the cell junction. It localises to the adherens junction. The catalysed reaction is Ca(2+)(in) = Ca(2+)(out). Its activity is regulated as follows. ATP binding enhances channel sensitivity to agonists. Ca(2+)-calmodulin prevents the ATP-mediated increased sensitivity to agonists. Its function is as follows. Non-selective calcium permeant cation channel involved in osmotic sensitivity and mechanosensitivity. Activation by exposure to hypotonicity within the physiological range exhibits an outward rectification. Also activated by phorbol esters. Channel activity seems to be regulated by a calmodulin-dependent mechanism. The sequence is that of Transient receptor potential cation channel subfamily V member 4 (TRPV4) from Gallus gallus (Chicken).